A 37-amino-acid chain; its full sequence is Large ribosomal subunit protein bL36 (37 aa).

The protein belongs to the bacterial ribosomal protein bL36 family.

In Acidovorax ebreus (strain TPSY) (Diaphorobacter sp. (strain TPSY)), this protein is Large ribosomal subunit protein bL36.